Reading from the N-terminus, the 468-residue chain is ATP synthase subunit beta (468 aa).

Gly148–Thr155 lines the ATP pocket.

The protein belongs to the ATPase alpha/beta chains family. F-type ATPases have 2 components, CF(1) - the catalytic core - and CF(0) - the membrane proton channel. CF(1) has five subunits: alpha(3), beta(3), gamma(1), delta(1), epsilon(1). CF(0) has three main subunits: a(1), b(2) and c(9-12). The alpha and beta chains form an alternating ring which encloses part of the gamma chain. CF(1) is attached to CF(0) by a central stalk formed by the gamma and epsilon chains, while a peripheral stalk is formed by the delta and b chains.

It is found in the cell inner membrane. It catalyses the reaction ATP + H2O + 4 H(+)(in) = ADP + phosphate + 5 H(+)(out). In terms of biological role, produces ATP from ADP in the presence of a proton gradient across the membrane. The catalytic sites are hosted primarily by the beta subunits. The sequence is that of ATP synthase subunit beta from Stenotrophomonas maltophilia (strain R551-3).